A 273-amino-acid chain; its full sequence is Putative pyruvate, phosphate dikinase regulatory protein (273 aa).

153-160 (GISRTSKT) serves as a coordination point for ADP.

This sequence belongs to the pyruvate, phosphate/water dikinase regulatory protein family. PDRP subfamily.

The enzyme catalyses N(tele)-phospho-L-histidyl/L-threonyl-[pyruvate, phosphate dikinase] + ADP = N(tele)-phospho-L-histidyl/O-phospho-L-threonyl-[pyruvate, phosphate dikinase] + AMP + H(+). It carries out the reaction N(tele)-phospho-L-histidyl/O-phospho-L-threonyl-[pyruvate, phosphate dikinase] + phosphate + H(+) = N(tele)-phospho-L-histidyl/L-threonyl-[pyruvate, phosphate dikinase] + diphosphate. In terms of biological role, bifunctional serine/threonine kinase and phosphorylase involved in the regulation of the pyruvate, phosphate dikinase (PPDK) by catalyzing its phosphorylation/dephosphorylation. This is Putative pyruvate, phosphate dikinase regulatory protein from Rhizobium etli (strain CIAT 652).